A 156-amino-acid chain; its full sequence is Endogenous retrovirus group K member 8 Pro protein (156 aa).

In terms of domain architecture, Peptidase A2 spans phenylalanine 21–leucine 96. Aspartate 26 is a catalytic residue. Positions tyrosine 111 to phenylalanine 156 constitute a G-patch domain.

The protein belongs to the peptidase A2 family. HERV class-II K(HML-2) subfamily. Active as a homodimer. Autoproteolytically processed at the N-terminus. Expected C-terminal autoprocessing not detected. The sequence shown is that of the processed Pro protein.

The catalysed reaction is Processing at the authentic HIV-1 PR recognition site and release of the mature p17 matrix and the p24 capsid protein, as a result of the cleavage of the -SQNY-|-PIVQ- cleavage site.. Retroviral proteases have roles in the processing of the primary translation products and the maturation of the viral particle. Endogenous Pro proteins may have kept, lost or modified their original function during evolution. This chain is Endogenous retrovirus group K member 8 Pro protein (ERVK-8), found in Homo sapiens (Human).